The sequence spans 113 residues: Dolichyl-diphosphooligosaccharide--protein glycosyltransferase subunit DAD1 (113 aa).

S2 is subject to N-acetylserine. Residues 2 to 30 (SASVLSVISRFLEEYLSSTPQRLKLLDAY) lie on the Cytoplasmic side of the membrane. The chain crosses the membrane as a helical span at residues 31-51 (LLYILLTGALQFGYCLLVGTF). P52 is a topological domain (lumenal). Residues 53-73 (FNSFLSGFISCVGSFILAVCL) traverse the membrane as a helical segment. The Cytoplasmic portion of the chain corresponds to 74-92 (RIQINPQNKADFQGISPER). Residues 93 to 113 (AFADFLFASTILHLVVMNFVG) traverse the membrane as a helical segment.

This sequence belongs to the DAD/OST2 family. In terms of assembly, component of the oligosaccharyltransferase (OST) complex. OST exists in two different complex forms which contain common core subunits RPN1, RPN2, OST48, OST4, DAD1 and TMEM258, either STT3A or STT3B as catalytic subunits, and form-specific accessory subunits. STT3A complex assembly occurs through the formation of 3 subcomplexes. Subcomplex 1 contains RPN1 and TMEM258, subcomplex 2 contains the STT3A-specific subunits STT3A, DC2/OSTC, and KCP2 as well as the core subunit OST4, and subcomplex 3 contains RPN2, DAD1, and OST48. The STT3A complex can form stable complexes with the Sec61 complex or with both the Sec61 and TRAP complexes.

It is found in the endoplasmic reticulum membrane. It functions in the pathway protein modification; protein glycosylation. Functionally, subunit of the oligosaccharyl transferase (OST) complex that catalyzes the initial transfer of a defined glycan (Glc(3)Man(9)GlcNAc(2) in eukaryotes) from the lipid carrier dolichol-pyrophosphate to an asparagine residue within an Asn-X-Ser/Thr consensus motif in nascent polypeptide chains, the first step in protein N-glycosylation. N-glycosylation occurs cotranslationally and the complex associates with the Sec61 complex at the channel-forming translocon complex that mediates protein translocation across the endoplasmic reticulum (ER). All subunits are required for a maximal enzyme activity. This chain is Dolichyl-diphosphooligosaccharide--protein glycosyltransferase subunit DAD1, found in Sus scrofa (Pig).